The sequence spans 514 residues: Extracellular exo-inulinase inuE (514 aa).

The N-terminal stretch at 1–18 is a signal peptide; it reads MRAFLALIFLTFVMNVES. Substrate is bound by residues 33-34 and Gln52; that span reads ND. The active-site Nucleophile is Asp34. Asn56 is a glycosylation site (N-linked (GlcNAc...) asparagine). Trp60 and Ser95 together coordinate substrate. N-linked (GlcNAc...) asparagine glycosylation is found at Asn104 and Asn110. 162 to 163 serves as a coordination point for substrate; the sequence is RD. N-linked (GlcNAc...) asparagine glycosylation is found at Asn197 and Asn203. Substrate is bound by residues Glu214 and Trp300. The active-site Proton donor/acceptor is the Glu214. Asn357, Asn371, Asn389, and Asn422 each carry an N-linked (GlcNAc...) asparagine glycan.

This sequence belongs to the glycosyl hydrolase 32 family.

The protein resides in the secreted. The catalysed reaction is Hydrolysis of terminal, non-reducing (2-&gt;1)- and (2-&gt;6)-linked beta-D-fructofuranose residues in fructans.. Exo-inulinase involved in utilization of the plant storage polymer inulin, consisting of fructooligosaccharides with a degree of polymerization (DP) value from 2 to 60. Splits off terminal fructose units successively from the non-reducing end of the inulin molecule. This Meyerozyma guilliermondii (Yeast) protein is Extracellular exo-inulinase inuE.